Reading from the N-terminus, the 267-residue chain is Trehalose-phosphate phosphatase (267 aa).

The active-site Nucleophile is the D20. Mg(2+)-binding residues include D20, D22, and D198. 20-22 is a binding site for substrate; sequence DLD.

Belongs to the trehalose phosphatase family. It depends on Mg(2+) as a cofactor.

The catalysed reaction is alpha,alpha-trehalose 6-phosphate + H2O = alpha,alpha-trehalose + phosphate. The protein operates within glycan biosynthesis; trehalose biosynthesis. Removes the phosphate from trehalose 6-phosphate to produce free trehalose. The sequence is that of Trehalose-phosphate phosphatase (otsB) from Salmonella typhimurium (strain SL1344).